A 185-amino-acid polypeptide reads, in one-letter code: Ribosome-recycling factor (185 aa).

The segment at 128-158 (VRNTRQDANNKVKKLEKDKEISEDESKKAQE) is disordered.

The protein belongs to the RRF family.

It is found in the cytoplasm. Its function is as follows. Responsible for the release of ribosomes from messenger RNA at the termination of protein biosynthesis. May increase the efficiency of translation by recycling ribosomes from one round of translation to another. The chain is Ribosome-recycling factor from Helicobacter pylori (strain J99 / ATCC 700824) (Campylobacter pylori J99).